Consider the following 67-residue polypeptide: Systemic RNA interference defective protein 5 (67 aa).

The Extracellular segment spans residues 1-18 (MPSKNCAKNLHACQWERD). A helical membrane pass occupies residues 19–39 (IALVFLGLMVLFNIGQVVYMN). Residues 40–67 (RARLYRLIRRGAEQIPADDEEPIIGIRD) lie on the Cytoplasmic side of the membrane.

Ubiquitously present in most tissues tested. Expressed in the somatic cells of intestine, muscle, neurons, somatic gonad and embryos but not in the germline (at protein level).

Its subcellular location is the late endosome membrane. Plays a role in RNA-mediated gene silencing by mediating transport of both ingested and endogenous dsRNA between cells. Not required for the uptake of dsRNA from the intestinal lumen. In Caenorhabditis elegans, this protein is Systemic RNA interference defective protein 5.